Consider the following 813-residue polypeptide: Phosphoribosylformylglycinamidine synthase subunit PurL (813 aa).

H56 is an active-site residue. ATP is bound by residues Y59 and K103. E105 is a binding site for Mg(2+). Residues 106–109 and R128 contribute to the substrate site; that span reads SHNH. H107 (proton acceptor) is an active-site residue. Residue D129 coordinates Mg(2+). Q253 lines the substrate pocket. D281 lines the Mg(2+) pocket. 325-327 serves as a coordination point for substrate; that stretch reads ESQ. Positions 511 and 548 each coordinate ATP. A Mg(2+)-binding site is contributed by N549. A substrate-binding site is contributed by S551.

The protein belongs to the FGAMS family. As to quaternary structure, monomer. Part of the FGAM synthase complex composed of 1 PurL, 1 PurQ and 2 PurS subunits.

The protein localises to the cytoplasm. It catalyses the reaction N(2)-formyl-N(1)-(5-phospho-beta-D-ribosyl)glycinamide + L-glutamine + ATP + H2O = 2-formamido-N(1)-(5-O-phospho-beta-D-ribosyl)acetamidine + L-glutamate + ADP + phosphate + H(+). The protein operates within purine metabolism; IMP biosynthesis via de novo pathway; 5-amino-1-(5-phospho-D-ribosyl)imidazole from N(2)-formyl-N(1)-(5-phospho-D-ribosyl)glycinamide: step 1/2. In terms of biological role, part of the phosphoribosylformylglycinamidine synthase complex involved in the purines biosynthetic pathway. Catalyzes the ATP-dependent conversion of formylglycinamide ribonucleotide (FGAR) and glutamine to yield formylglycinamidine ribonucleotide (FGAM) and glutamate. The FGAM synthase complex is composed of three subunits. PurQ produces an ammonia molecule by converting glutamine to glutamate. PurL transfers the ammonia molecule to FGAR to form FGAM in an ATP-dependent manner. PurS interacts with PurQ and PurL and is thought to assist in the transfer of the ammonia molecule from PurQ to PurL. This Corynebacterium jeikeium (strain K411) protein is Phosphoribosylformylglycinamidine synthase subunit PurL.